The sequence spans 834 residues: Ras GTPase-activating protein 3 (834 aa).

C2 domains are found at residues 1-112 (MAVE…DTWF) and 123-263 (VQGK…EAWY). A2 carries the N-acetylalanine modification. Phosphotyrosine is present on Y66. Residue S77 is modified to Phosphoserine. T110 is subject to Phosphothreonine. Residues 346 to 561 (GRVVPFISAI…DAVKNFLDLI (216 aa)) enclose the Ras-GAP domain. Positions 576–677 (ILLKEGFMIK…WIDILTKVSQ (102 aa)) constitute a PH domain. Residues 679 to 715 (NQKRLTVFHPSAYLNGHWLCCRASSDTAAGCTPCTGG) form a Btk-type zinc finger. The Zn(2+) site is built by H687, C698, C699, and C709. A phosphoserine mark is found at S809 and S833.

High levels in brain, lower in spleen and lung.

Its function is as follows. Inhibitory regulator of the Ras-cyclic AMP pathway. May bind inositol tetrakisphosphate (IP4). This is Ras GTPase-activating protein 3 (Rasa3) from Mus musculus (Mouse).